The sequence spans 491 residues: Aspartyl/glutamyl-tRNA(Asn/Gln) amidotransferase subunit B (491 aa).

It belongs to the GatB/GatE family. GatB subfamily. Heterotrimer of A, B and C subunits.

It catalyses the reaction L-glutamyl-tRNA(Gln) + L-glutamine + ATP + H2O = L-glutaminyl-tRNA(Gln) + L-glutamate + ADP + phosphate + H(+). It carries out the reaction L-aspartyl-tRNA(Asn) + L-glutamine + ATP + H2O = L-asparaginyl-tRNA(Asn) + L-glutamate + ADP + phosphate + 2 H(+). Its function is as follows. Allows the formation of correctly charged Asn-tRNA(Asn) or Gln-tRNA(Gln) through the transamidation of misacylated Asp-tRNA(Asn) or Glu-tRNA(Gln) in organisms which lack either or both of asparaginyl-tRNA or glutaminyl-tRNA synthetases. The reaction takes place in the presence of glutamine and ATP through an activated phospho-Asp-tRNA(Asn) or phospho-Glu-tRNA(Gln). The sequence is that of Aspartyl/glutamyl-tRNA(Asn/Gln) amidotransferase subunit B from Burkholderia ambifaria (strain ATCC BAA-244 / DSM 16087 / CCUG 44356 / LMG 19182 / AMMD) (Burkholderia cepacia (strain AMMD)).